The sequence spans 151 residues: Large ribosomal subunit protein uL15 (151 aa).

Residues 1–60 (MAENNPLKIHNLRPAPGAKTAKTRVGRGEASKGKTAGRGTKGTKARYQVPERFEGGQMPL) form a disordered region.

The protein belongs to the universal ribosomal protein uL15 family. Part of the 50S ribosomal subunit.

Functionally, binds to the 23S rRNA. In Streptomyces avermitilis (strain ATCC 31267 / DSM 46492 / JCM 5070 / NBRC 14893 / NCIMB 12804 / NRRL 8165 / MA-4680), this protein is Large ribosomal subunit protein uL15.